Here is a 406-residue protein sequence, read N- to C-terminus: Elongation factor Tu (406 aa).

One can recognise a tr-type G domain in the interval 10–215; the sequence is KPHVNVGTIG…AIDEYIPTPV (206 aa). The segment at 19–26 is G1; it reads GHVDHGKT. Residue 19-26 coordinates GTP; it reads GHVDHGKT. Threonine 26 contributes to the Mg(2+) binding site. The G2 stretch occupies residues 61–65; sequence GITIN. The interval 82–85 is G3; sequence DCPG. GTP-binding positions include 82 to 86 and 137 to 140; these read DCPGH and NKVD. The G4 stretch occupies residues 137-140; that stretch reads NKVD. A G5 region spans residues 175 to 177; sequence SAL.

It belongs to the TRAFAC class translation factor GTPase superfamily. Classic translation factor GTPase family. EF-Tu/EF-1A subfamily. Monomer.

It localises to the cytoplasm. The enzyme catalyses GTP + H2O = GDP + phosphate + H(+). Functionally, GTP hydrolase that promotes the GTP-dependent binding of aminoacyl-tRNA to the A-site of ribosomes during protein biosynthesis. The chain is Elongation factor Tu from Thermus aquaticus.